Here is a 391-residue protein sequence, read N- to C-terminus: MPRSDYLFTSESVSEGHPDKVSDRISDTVVDAYLAAMPEARLGVETLTTTNRVVIAGEVRGPDSVTFKDLEELTREAVRDIGYEQSGFHWKNNDVAIHLHAQSADIAQGVDAAGNKDEGAGDQGIMFGYAADETPALMPAPIFYAHKILKDLADARKAKQGDAAKLGPDAKSQVTVRYADGRPVEVTQIVLSTQHLDESLDSADVRAIVEPYILKALPQGWVNEGTVWHVNPTGKFVIGGPDGDAGLTGRKIIVDTYGGAAPHGGGAFSGKDPTKVDRSAAYAARYLAKNVVAAGLARRATIQLSYAIGVAKPLSIYVDLHGTGTVDEAKLEGVLMDALDLSPRGIRTALQLNKPIYARTSAYGHFGREPDADGGFSWEKTDLADKLKSAF.

A disordered region spans residues 1-20 (MPRSDYLFTSESVSEGHPDK). His-17 is a binding site for ATP. Mg(2+) is bound at residue Asp-19. Glu-45 provides a ligand contact to K(+). Residues Glu-58 and Gln-102 each coordinate L-methionine. The flexible loop stretch occupies residues 102 to 112 (QSADIAQGVDA). Residues 169–171 (DAK), 235–236 (KF), Asp-244, 250–251 (RK), Ala-267, and Lys-271 contribute to the ATP site. Asp-244 contributes to the L-methionine binding site. Residue Lys-275 coordinates L-methionine.

The protein belongs to the AdoMet synthase family. In terms of assembly, homotetramer; dimer of dimers. Mg(2+) serves as cofactor. The cofactor is K(+).

It is found in the cytoplasm. It carries out the reaction L-methionine + ATP + H2O = S-adenosyl-L-methionine + phosphate + diphosphate. The protein operates within amino-acid biosynthesis; S-adenosyl-L-methionine biosynthesis; S-adenosyl-L-methionine from L-methionine: step 1/1. Functionally, catalyzes the formation of S-adenosylmethionine (AdoMet) from methionine and ATP. The overall synthetic reaction is composed of two sequential steps, AdoMet formation and the subsequent tripolyphosphate hydrolysis which occurs prior to release of AdoMet from the enzyme. The chain is S-adenosylmethionine synthase from Methylorubrum populi (strain ATCC BAA-705 / NCIMB 13946 / BJ001) (Methylobacterium populi).